Reading from the N-terminus, the 720-residue chain is Hexanoyl-CoA synthase (720 aa).

The helical transmembrane segment at 242–262 (VDAVVIYLAIVLAGYVVVSIA) threads the bilayer. Residue 290–293 (RGKK) coordinates CoA. ATP contacts are provided by residues 477-479 (GEA), 499-504 (EMCGGT), E585, and R607. CoA is bound at residue G615. Residue K618 participates in ATP binding. Residue Q681 participates in CoA binding.

Belongs to the ATP-dependent AMP-binding enzyme family. The cofactor is Mg(2+). In terms of tissue distribution, accumulates in glandular trichomes, especially in female flowers. Present at low levels in roots, stems and leaves.

The protein localises to the cytoplasm. It localises to the cytosol. The protein resides in the membrane. It carries out the reaction hexanoate + ATP + CoA = hexanoyl-CoA + AMP + diphosphate. The protein operates within secondary metabolite biosynthesis; terpenoid biosynthesis. With respect to regulation, inhibitied by high CoA concentrations. Involved in the biosynthesis of cannabinoids-related terpenophenolic natural products, which have pharmacological activity. Acyl-activating enzyme that catalyzes the conversion of hexanoic acid to hexanoyl-CoA, precursor of the cannabinoid pathway. Can also activate other fatty acids including heptanoate, octanoate and nonanoate. The chain is Hexanoyl-CoA synthase from Cannabis sativa (Hemp).